Reading from the N-terminus, the 129-residue chain is ATP synthase epsilon chain (129 aa).

It belongs to the ATPase epsilon chain family. As to quaternary structure, F-type ATPases have 2 components, CF(1) - the catalytic core - and CF(0) - the membrane proton channel. CF(1) has five subunits: alpha(3), beta(3), gamma(1), delta(1), epsilon(1). CF(0) has three main subunits: a, b and c.

The protein resides in the cell inner membrane. In terms of biological role, produces ATP from ADP in the presence of a proton gradient across the membrane. The protein is ATP synthase epsilon chain of Campylobacter jejuni subsp. doylei (strain ATCC BAA-1458 / RM4099 / 269.97).